Reading from the N-terminus, the 227-residue chain is Deoxyribose-phosphate aldolase (227 aa).

The Proton donor/acceptor role is filled by D96. K158 acts as the Schiff-base intermediate with acetaldehyde in catalysis. The active-site Proton donor/acceptor is K187.

Belongs to the DeoC/FbaB aldolase family. DeoC type 1 subfamily.

Its subcellular location is the cytoplasm. It carries out the reaction 2-deoxy-D-ribose 5-phosphate = D-glyceraldehyde 3-phosphate + acetaldehyde. Its pathway is carbohydrate degradation; 2-deoxy-D-ribose 1-phosphate degradation; D-glyceraldehyde 3-phosphate and acetaldehyde from 2-deoxy-alpha-D-ribose 1-phosphate: step 2/2. Its function is as follows. Catalyzes a reversible aldol reaction between acetaldehyde and D-glyceraldehyde 3-phosphate to generate 2-deoxy-D-ribose 5-phosphate. This Desulfotalea psychrophila (strain LSv54 / DSM 12343) protein is Deoxyribose-phosphate aldolase.